The sequence spans 440 residues: MNLISRTLTRAVSSSLYHSKAAKLPTQKWIISQQIRVFSATVISGGGKKPLAKVSVKPPLNVATEKESTPPKKIEYKPEISNWINLIGFVEQPVQFGPCSDGKFWAGTVISQRSGSKSSNFWIPIIFEGDLAKIAVQHVKKEDRIHVSGKLFIDSPPPNVTYSQSNVQVMVQNLNFVQAATSTTKTISPPEKEVTSIKKKPARSKKVKVIDEETSNSWKHLIENPKEWLDHRGNKANGLVKPGHPDFKMKVGGLSLWLSTAPDWALLKLEELKFDVLVPKGNIKLNQLKGEESWKDLVQNPDKWLDNRSDKTNVKYPDFKHKETGEALWMTNSPIWVLSKLPPLKKNQERPFMSNKVSQLELDVEVPKGNLKQLKREEIWKNLVENPSKWWDNRLDKRNPKGPDFKHKETGEALWIGDSPTWALSKLPPLKKNQERPVMA.

The transit peptide at 1–61 directs the protein to the chloroplast and mitochondrion; that stretch reads MNLISRTLTR…AKVSVKPPLN (61 aa). The region spanning 80–178 is the SSB domain; sequence ISNWINLIGF…VMVQNLNFVQ (99 aa). PDF region stretches follow at residues 218-270, 294-342, and 380-428; these read WKHL…LKLE, WKDL…SKLP, and WKNL…SKLP.

Expressed primarily in the female gametophyte and in the floral abscission zone.

Its subcellular location is the mitochondrion. It localises to the plastid. The protein localises to the chloroplast. Binds single-stranded DNA. The protein is Protein OSB3, chloroplastic/mitochondrial (OSB3) of Arabidopsis thaliana (Mouse-ear cress).